Here is a 320-residue protein sequence, read N- to C-terminus: Ferrochelatase (320 aa).

Positions 194 and 275 each coordinate Fe cation.

This sequence belongs to the ferrochelatase family. As to quaternary structure, monomer.

The protein localises to the cytoplasm. The catalysed reaction is heme b + 2 H(+) = protoporphyrin IX + Fe(2+). Its pathway is porphyrin-containing compound metabolism; protoheme biosynthesis; protoheme from protoporphyrin-IX: step 1/1. Its function is as follows. Catalyzes the ferrous insertion into protoporphyrin IX. This Escherichia coli O157:H7 (strain EC4115 / EHEC) protein is Ferrochelatase.